A 759-amino-acid polypeptide reads, in one-letter code: 1,4-alpha-glucan branching enzyme GlgB (759 aa).

The active-site Nucleophile is the Asp-431. The active-site Proton donor is the Glu-484.

The protein belongs to the glycosyl hydrolase 13 family. GlgB subfamily. In terms of assembly, monomer.

The catalysed reaction is Transfers a segment of a (1-&gt;4)-alpha-D-glucan chain to a primary hydroxy group in a similar glucan chain.. It participates in glycan biosynthesis; glycogen biosynthesis. Catalyzes the formation of the alpha-1,6-glucosidic linkages in glycogen by scission of a 1,4-alpha-linked oligosaccharide from growing alpha-1,4-glucan chains and the subsequent attachment of the oligosaccharide to the alpha-1,6 position. The polypeptide is 1,4-alpha-glucan branching enzyme GlgB (Prochlorococcus marinus (strain MIT 9211)).